The sequence spans 342 residues: Protein RecA 1 (342 aa).

68-75 (GNESSGKT) contributes to the ATP binding site.

It belongs to the RecA family.

It localises to the cytoplasm. Its function is as follows. Can catalyze the hydrolysis of ATP in the presence of single-stranded DNA, the ATP-dependent uptake of single-stranded DNA by duplex DNA, and the ATP-dependent hybridization of homologous single-stranded DNAs. It interacts with LexA causing its activation and leading to its autocatalytic cleavage. The polypeptide is Protein RecA 1 (Myxococcus xanthus).